The following is a 743-amino-acid chain: MEHTYQYSWIIPLVPLPVPMLIGVGLLFFPTATKNLRRMWAFISILLLSIVMIFSIDLSIEQIDRTSIYQSLRTWTITSDLSFEFGYFIDPLTSIMSILITTVGILVLIYSDNYMSHDQGYLRFFAYMSFFNASMLGLVTSSNFIQIYIFWELVGMCSYLLIGFWFTRPIAAGACQKAFVTNRVGDFGLLLGILGLYWLTGSFEFRDLFEILKNLIYNNEVNLLFVTLCAFLLFAGPVAKSAQFPLHVWLPDAMEGPTPISALIHAATMVAAGIFLVARLLPLFIVIPYAMNLISLIGIITVFLGATLALAQQDIKRGLAYSTMSQLGYMMLALGMGSYRAALFHLITHAYSKALLFLGSGSIIHSMEAIVGYFPDKSQNMVLMGGLRKHVPITKTAFLVGTLSLCGIPPLACFWSKDEILNDTWLYSPIFATIAFFTAGLTAFYMFRIYLLTFEGPFNFCLQNYSGKKRNSLYSISLWGKEEPKPIKNKFHLVALLTMNNNKRASFFAKKTHRIASTVTNMPFITIFPFGAAKTFCYPHESDNTILFVMLVLVLFPLFVGAIGIPLNQEVIESDILSKLLTPSINLLQQNSTHFVDWYEVVKNPTLSVSITYFGILLAYFLYKPFYSSLHNWNILNFFAKRGPKRILWDKILNFLYDWSYNRAYIDAFYTRSLTEGIRGLAELTHLFDRRVIDGITNGVGITSFFVGEGIKYLGGSRISFYLLLYLFSLLFFLIFLFFFFFK.

Transmembrane regions (helical) follow at residues 9-29 (WIIPLVPLPVPMLIGVGLLFF), 40-60 (WAFISILLLSIVMIFSIDLSI), 89-109 (IDPLTSIMSILITTVGILVLI), 125-145 (FAYMSFFNASMLGLVTSSNFI), 147-167 (IYIFWELVGMCSYLLIGFWFT), 185-205 (GDFGLLLGILGLYWLTGSFEF), 219-239 (NEVNLLFVTLCAFLLFAGPVA), 258-278 (TPISALIHAATMVAAGIFLVA), 280-300 (LLPLFIVIPYAMNLISLIGII), 327-347 (LGYMMLALGMGSYRAALFHLI), 354-374 (ALLFLGSGSIIHSMEAIVGYF), 396-416 (TAFLVGTLSLCGIPPLACFWS), 425-445 (WLYSPIFATIAFFTAGLTAFY), 546-566 (ILFVMLVLVLFPLFVGAIGIP), 607-627 (LSVSITYFGILLAYFLYKPFY), and 721-741 (FYLLLYLFSLLFFLIFLFFFF).

The protein belongs to the complex I subunit 5 family. As to quaternary structure, NDH is composed of at least 16 different subunits, 5 of which are encoded in the nucleus.

It localises to the plastid. The protein resides in the chloroplast thylakoid membrane. It carries out the reaction a plastoquinone + NADH + (n+1) H(+)(in) = a plastoquinol + NAD(+) + n H(+)(out). The catalysed reaction is a plastoquinone + NADPH + (n+1) H(+)(in) = a plastoquinol + NADP(+) + n H(+)(out). Its function is as follows. NDH shuttles electrons from NAD(P)H:plastoquinone, via FMN and iron-sulfur (Fe-S) centers, to quinones in the photosynthetic chain and possibly in a chloroplast respiratory chain. The immediate electron acceptor for the enzyme in this species is believed to be plastoquinone. Couples the redox reaction to proton translocation, and thus conserves the redox energy in a proton gradient. This is NAD(P)H-quinone oxidoreductase subunit 5, chloroplastic (ndhF) from Citrus sinensis (Sweet orange).